The following is a 167-amino-acid chain: Sperm acrosome membrane-associated protein 3 (167 aa).

The Cytoplasmic portion of the chain corresponds to 1 to 63 (MVSALREAPL…EARSRALRRR (63 aa)). A helical; Signal-anchor for type II membrane protein transmembrane segment spans residues 64–84 (WCPAGIILLALISLLSCLLPA). Residues 85 to 167 (SEAKVYGRCE…VPNVCQMYCS (83 aa)) are Extracellular-facing. Positions 88-167 (KVYGRCELAR…VPNVCQMYCS (80 aa)) constitute a C-type lysozyme domain. Cys-151 and Cys-166 are oxidised to a cystine.

It belongs to the glycosyl hydrolase 22 family. In terms of assembly, interacts with ASTL. Post-translationally, the processed form derives from the membrane form by proteolytic processing.

The protein resides in the cytoplasmic vesicle. It localises to the secretory vesicle. The protein localises to the acrosome membrane. Its function is as follows. Sperm surface membrane protein that may be involved in sperm-egg plasma membrane adhesion and fusion during fertilization. It could be a potential receptor for the egg oligosaccharide residue N-acetylglucosamine, which is present in the extracellular matrix over the egg plasma membrane. The processed form has no detectable bacteriolytic activity in vitro. The sequence is that of Sperm acrosome membrane-associated protein 3 (SPACA3) from Pongo pygmaeus (Bornean orangutan).